The following is an 842-amino-acid chain: Circularly permutated Ras protein 1 (842 aa).

GTP-binding positions include 62 to 66 (DTAGQ), 121 to 124 (NKVD), and 181 to 188 (GGGGVGKS). The tract at residues 253 to 274 (SGKDKQPSPQQAASPSTIDRTG) is disordered. Residues 259 to 274 (PSPQQAASPSTIDRTG) are compositionally biased toward polar residues. Positions 377 to 627 (IIIYCIDVSG…TQNPMIATDV (251 aa)) constitute a VWFA domain.

Belongs to the small GTPase superfamily. CpRas family.

This Dictyostelium discoideum (Social amoeba) protein is Circularly permutated Ras protein 1 (cpras1).